The sequence spans 289 residues: 4-diphosphocytidyl-2-C-methyl-D-erythritol kinase (289 aa).

The active site involves lysine 16. 99-109 serves as a coordination point for ATP; the sequence is PMGGGIGGGSS. Aspartate 141 is a catalytic residue.

It belongs to the GHMP kinase family. IspE subfamily.

The enzyme catalyses 4-CDP-2-C-methyl-D-erythritol + ATP = 4-CDP-2-C-methyl-D-erythritol 2-phosphate + ADP + H(+). The protein operates within isoprenoid biosynthesis; isopentenyl diphosphate biosynthesis via DXP pathway; isopentenyl diphosphate from 1-deoxy-D-xylulose 5-phosphate: step 3/6. In terms of biological role, catalyzes the phosphorylation of the position 2 hydroxy group of 4-diphosphocytidyl-2C-methyl-D-erythritol. The polypeptide is 4-diphosphocytidyl-2-C-methyl-D-erythritol kinase (Ralstonia nicotianae (strain ATCC BAA-1114 / GMI1000) (Ralstonia solanacearum)).